Consider the following 302-residue polypeptide: Spermidine synthase (302 aa).

An N-acetylmethionine modification is found at Met-1. The PABS domain occupies 18–253; the sequence is EGWFRETCSL…GQIGFMLCSK (236 aa). S-adenosyl 3-(methylsulfanyl)propylamine is bound at residue Gln-49. Position 79 (Tyr-79) interacts with putrescine. S-adenosyl 3-(methylsulfanyl)propylamine-binding positions include Gln-80, Asp-104, Glu-124, 155-156, and Asp-173; that span reads DG. The active-site Proton acceptor is the Asp-173. Residues 173 to 176 and Tyr-241 each bind putrescine; that span reads DSSD.

The protein belongs to the spermidine/spermine synthase family. Homodimer or homotetramer.

It catalyses the reaction S-adenosyl 3-(methylsulfanyl)propylamine + putrescine = S-methyl-5'-thioadenosine + spermidine + H(+). Its pathway is amine and polyamine biosynthesis; spermidine biosynthesis; spermidine from putrescine: step 1/1. Its activity is regulated as follows. The activity is thought to be regulated mainly by the availability of decarboxylated S-adenosylmethionine. Catalyzes the production of spermidine from putrescine and decarboxylated S-adenosylmethionine (dcSAM). Has a strong preference for putrescine as substrate, and has very low activity towards 1,3-diaminopropane. Has extremely low activity towards spermidine. The sequence is that of Spermidine synthase (SRM) from Homo sapiens (Human).